A 112-amino-acid polypeptide reads, in one-letter code: Large ribosomal subunit protein uL22 (112 aa).

Belongs to the universal ribosomal protein uL22 family. As to quaternary structure, part of the 50S ribosomal subunit.

Its function is as follows. This protein binds specifically to 23S rRNA; its binding is stimulated by other ribosomal proteins, e.g. L4, L17, and L20. It is important during the early stages of 50S assembly. It makes multiple contacts with different domains of the 23S rRNA in the assembled 50S subunit and ribosome. In terms of biological role, the globular domain of the protein is located near the polypeptide exit tunnel on the outside of the subunit, while an extended beta-hairpin is found that lines the wall of the exit tunnel in the center of the 70S ribosome. This is Large ribosomal subunit protein uL22 from Anaplasma marginale (strain Florida).